The following is a 372-amino-acid chain: GRASP65 homolog protein 1 (372 aa).

An N-acetylmethionine modification is found at methionine 1. 2 consecutive PDZ GRASP-type domains span residues 66–183 (SGLR…WTPL) and 188–276 (FTYH…YGFL). The tract at residues 66-292 (SGLRIVWVDE…KHCPQQAQQQ (227 aa)) is GRASP. Serine 155 bears the Phosphoserine mark. The interval 312-372 (VPSAFTAPPV…PPPQKQSSSD (61 aa)) is disordered.

In terms of assembly, homodimer. Interacts with BUG1 (via C-terminus), probably forming a heterooligomer consisting of a GRH1 dimer and a BUG1 dimer. Interacts with COPII coat components SEC23, SEC24, SFB2 and SFB3. In terms of processing, N-terminal acetylation; by N-terminal acetyltransferase NatC.

It localises to the cytoplasm. It is found in the golgi apparatus. The protein localises to the cis-Golgi network membrane. Its function is as follows. Involved in the spindle assembly checkpoint. Involved in ER to Golgi vesicle-mediated transport by either facilitating USO1-dependent and -independent tethering or increasing target accuracy of fusion events of COPII-coated vesicles. The polypeptide is GRASP65 homolog protein 1 (GRH1) (Saccharomyces cerevisiae (strain ATCC 204508 / S288c) (Baker's yeast)).